Here is a 95-residue protein sequence, read N- to C-terminus: Alpha-defensin 20 (95 aa).

Residues Met1–Ala19 form the signal peptide. A propeptide spanning residues Asp20–Ser58 is cleaved from the precursor. The interval Ile22 to Lys57 is disordered. Residues Thr25–Gln40 show a composition bias toward acidic residues. 3 disulfides stabilise this stretch: Cys64/Cys89, Cys66/Cys81, and Cys71/Cys88.

Belongs to the alpha-defensin family.

The protein resides in the secreted. Its function is as follows. May have microbicidal activities. In Mus musculus (Mouse), this protein is Alpha-defensin 20 (Defa20).